Reading from the N-terminus, the 384-residue chain is Transcription factor 7 (384 aa).

Gly residues predominate over residues 1–16 (MPQLDSGGGGAGGGDD). Positions 1–59 (MPQLDSGGGGAGGGDDLGAPDELLAFQDEGEEQDDKSRDSAAGPERDLAELKSSLVNES) are CTNNB1-binding. Disordered stretches follow at residues 1 to 88 (MPQL…LGRE), 133 to 183 (PPSG…QKQV), and 337 to 384 (SARD…MTVL). Residues 35 to 50 (DKSRDSAAGPERDLAE) show a composition bias toward basic and acidic residues. The span at 62–78 (AAGGAGIPGVPGAGAGA) shows a compositional bias: gly residues. The segment at residues 269 to 337 (IKKPLNAFML…LHMQLYPGWS (69 aa)) is a DNA-binding region (HMG box). The Nuclear localization signal motif lies at 344–348 (KKKRR). Residues 352-370 (KHQESTTGGKRNAFGTYPE) are compositionally biased toward basic and acidic residues. The span at 374–384 (APAPFLPMTVL) shows a compositional bias: low complexity.

It belongs to the TCF/LEF family. As to quaternary structure, binds the armadillo repeat of CTNNB1 and forms a stable complex. Interacts with TLE5, TLE1, TLE2, TLE3 and TLE4. Interacts with MLLT11. Long isoform interacts (via N-terminus) with SOX13; inhibits WNT-mediated transcriptional activity. Interacts with DAZAP2. As to expression, predominantly expressed in T-cells. Also detected in proliferating intestinal epithelial cells and in the basal epithelial cells of mammary gland epithelium.

The protein resides in the nucleus. Transcriptional activator involved in T-cell lymphocyte differentiation. Necessary for the survival of CD4(+) CD8(+) immature thymocytes. Isoforms lacking the N-terminal CTNNB1 binding domain cannot fulfill this role. Binds to the T-lymphocyte-specific enhancer element (5'-WWCAAAG-3') found in the promoter of the CD3E gene. Represses expression of the T-cell receptor gamma gene in alpha-beta T-cell lineages. Required for the development of natural killer receptor-positive lymphoid tissue inducer T-cells. TLE1, TLE2, TLE3 and TLE4 repress transactivation mediated by TCF7 and CTNNB1. May also act as feedback transcriptional repressor of CTNNB1 and TCF7L2 target genes. The protein is Transcription factor 7 of Homo sapiens (Human).